A 384-amino-acid polypeptide reads, in one-letter code: MSRYLFTSESVSEGHPDKIADQISDAVLDEILKQDPKARVACETYVKTGMALVGGEITTSAWVDIENLTRQVICDIGYKHSDMGFDGHSCAVLNAIGKQSSDINQGVDRENPLDQGAGDQGIMFGYATNETEVLMPAAITYAHRLMERQAKVRKEGTLPWLRPDAKSQVTLKYEDHKIVGVDAVVLSTQHCDSISQHDLHEAVMEEIIKPVLPAEWLSKETKYFINPTGRFVIGGPMGDCGLTGRKIIVDTYGGAARHGGGAFSGKDPSKVDRSAAYAARYVAKNIVAAGLADRCEIQLSYAIGVADPTSIMVETFGTGKVANELLVALVREFFDLRPYGLIKMLDLIQPIYRETAAYGHFGREQFPWEKVDRAEELRAAAGLK.

His15 lines the ATP pocket. Position 17 (Asp17) interacts with Mg(2+). Residue Glu43 participates in K(+) binding. 2 residues coordinate L-methionine: Glu56 and Gln99. The tract at residues 99 to 109 (QSSDINQGVDR) is flexible loop. ATP is bound by residues 164–166 (DAK), 230–231 (RF), Asp239, 245–246 (RK), Ala262, and Lys266. Asp239 contacts L-methionine. L-methionine is bound at residue Lys270.

Belongs to the AdoMet synthase family. Homotetramer; dimer of dimers. It depends on Mg(2+) as a cofactor. The cofactor is K(+).

The protein localises to the cytoplasm. It catalyses the reaction L-methionine + ATP + H2O = S-adenosyl-L-methionine + phosphate + diphosphate. Its pathway is amino-acid biosynthesis; S-adenosyl-L-methionine biosynthesis; S-adenosyl-L-methionine from L-methionine: step 1/1. Catalyzes the formation of S-adenosylmethionine (AdoMet) from methionine and ATP. The overall synthetic reaction is composed of two sequential steps, AdoMet formation and the subsequent tripolyphosphate hydrolysis which occurs prior to release of AdoMet from the enzyme. The chain is S-adenosylmethionine synthase from Pasteurella multocida (strain Pm70).